Here is an 856-residue protein sequence, read N- to C-terminus: MFTLIFLFLFLNIPLLVADFISPRCFWKMKQNEYRDRHHGTGCIFLILAIQQPVKKEYFSHILNIQTHTENHKYALALAFSIYEINRNPDLLPNMSLIFIFSADSCEWESELSLIRFGLQNSDNLPNYLCEELTKCILALTNMNWATTVTLHTILSNFLSDQLLHITYGTFHPALSDHEKFPYLHQMASDHTSLALALVSFIIHFGWNWVGLVISDSDQGIQFLSYLRREMEKYTLCFAFVNMIPLNINLYMSRAEVYYNQIMTSSTNVVIIYGDTDSTLAVSFRMWESLGIQRLWITTSQWDVSPSMKDFTFGNKYGTFAFEQHHSEISGFKHFVQTLNSVKCPDEYLVKLEWMHFNCEVSASKCKTLKNCSSNHSLKWLMVHTFDMAFIEESYYIYNAVYAFAHVLHQFTFQKFDNLPKDNGKEHNYSCKKLYSYLRKNHFINPVGDRVSMNQRDKLQEEYDIVYIWNFPQGLGLRVKIGMFSPYFPNGQQVHLSEDMLKWARGSTQVPTSMCSADCGPGSRKFRMDGMAACCFHCKPCPENEISNETNVDNCVQCPEDQYANTEQNHCIRKAVVFLSYEEPLGVALSLLSLCFSAFTTVVLGIFVKHHNTPIVKANNRTLTYLLLISLIFCFLCPLLFIGHPNSATCILQQLTFGVVFTVSLSTVLAKTITVVLAFKIIASQRMMKYFLISGAINYIIPICILIQVIVCAVWLRASPPSVDIDAHSEHGQIIIVCHKGSVNAFYCVLGYLAILAFGSFTLAFLSRNLPGAFNEAKSITFSMLVFCSVWVTFIPVYHSTKGKVMVAVEIFSTLASSAGMLGCIFVPKCYTILFRQDQNSLEMIRVKSSSNVHVS.

The N-terminal stretch at 1–18 is a signal peptide; the sequence is MFTLIFLFLFLNIPLLVA. Residues 19 to 586 are Extracellular-facing; that stretch reads DFISPRCFWK…VFLSYEEPLG (568 aa). Residue Asn94 is glycosylated (N-linked (GlcNAc...) asparagine). A helical transmembrane segment spans residues 587 to 607; sequence VALSLLSLCFSAFTTVVLGIF. Over 608 to 622 the chain is Cytoplasmic; it reads VKHHNTPIVKANNRT. A helical membrane pass occupies residues 623 to 643; it reads LTYLLLISLIFCFLCPLLFIG. At 644-658 the chain is on the extracellular side; that stretch reads HPNSATCILQQLTFG. The chain crosses the membrane as a helical span at residues 659–679; the sequence is VVFTVSLSTVLAKTITVVLAF. Residues 680-690 lie on the Cytoplasmic side of the membrane; that stretch reads KIIASQRMMKY. A helical membrane pass occupies residues 691–711; it reads FLISGAINYIIPICILIQVIV. The Extracellular segment spans residues 712 to 745; sequence CAVWLRASPPSVDIDAHSEHGQIIIVCHKGSVNA. The helical transmembrane segment at 746-766 threads the bilayer; the sequence is FYCVLGYLAILAFGSFTLAFL. Over 767–778 the chain is Cytoplasmic; sequence SRNLPGAFNEAK. A helical transmembrane segment spans residues 779–799; sequence SITFSMLVFCSVWVTFIPVYH. The Extracellular segment spans residues 800–806; sequence STKGKVM. A helical membrane pass occupies residues 807–827; the sequence is VAVEIFSTLASSAGMLGCIFV. At 828 to 856 the chain is on the cytoplasmic side; that stretch reads PKCYTILFRQDQNSLEMIRVKSSSNVHVS.

The protein belongs to the G-protein coupled receptor 3 family. In terms of tissue distribution, expressed in the vomeronasal organ.

The protein resides in the cell membrane. Its function is as follows. Receptor for the Esp1 pheromone. Mediates the response to Esp1 which enhances female sexual receptive behavior (lordosis) upon male mounting, resulting in successful copulation. This chain is Vomeronasal type-2 receptor 116, found in Mus musculus (Mouse).